We begin with the raw amino-acid sequence, 247 residues long: Cell division protein ZapD (247 aa).

This sequence belongs to the ZapD family. In terms of assembly, interacts with FtsZ.

It localises to the cytoplasm. Its function is as follows. Cell division factor that enhances FtsZ-ring assembly. Directly interacts with FtsZ and promotes bundling of FtsZ protofilaments, with a reduction in FtsZ GTPase activity. This chain is Cell division protein ZapD, found in Citrobacter koseri (strain ATCC BAA-895 / CDC 4225-83 / SGSC4696).